The sequence spans 407 residues: Nuclear hormone receptor family member nhr-86 (407 aa).

A DNA-binding region (nuclear receptor) is located at residues 21 to 96; that stretch reads KSTCSICRED…VGMNPAGVQQ (76 aa). 2 consecutive NR C4-type zinc fingers follow at residues 24-44 and 60-79; these read CSIC…CRAC and CRGN…CRSC. Residues 130-405 form the NR LBD domain; sequence AQSALVEDLH…KDFYDLVNGK (276 aa). The tract at residues 394-405 is AF-2; sequence PPKDFYDLVNGK.

It belongs to the nuclear hormone receptor family. As to expression, expressed in intestinal epithelial cells, excretory gland cells and in several head neurons.

Its subcellular location is the nucleus. Its function is as follows. Nuclear receptor which acts as a transcription activator. Binds small molecule ligands, such as phenazine 1-carboxamide (PCN), a pathogen-derived metabolite, leading to modulation of innate immune responses against virulent pathogens. On exposure to exogenous PCN, P.aeruginosa and other xenobiotic immunostimulant such as R24, activates immune response genes, including irg-4, irg-5, mul-1, drd-50, cyp-35C1 and ugt-30, probably via direct interaction with their promoters, and independent of the p38 MAPK pmk-1 pathway. Exhibits higher affinity to R24 than PCN and thus induces stronger immune response. Binds its own promoter thereby autoregulating its expression in the head hypodermis and the pharynx. Possibly plays a role in lipid storage or catabolism. This Caenorhabditis elegans protein is Nuclear hormone receptor family member nhr-86 (nhr-86).